The sequence spans 184 residues: Large ribosomal subunit protein uL6 (184 aa).

Belongs to the universal ribosomal protein uL6 family. Part of the 50S ribosomal subunit.

Functionally, this protein binds to the 23S rRNA, and is important in its secondary structure. It is located near the subunit interface in the base of the L7/L12 stalk, and near the tRNA binding site of the peptidyltransferase center. This chain is Large ribosomal subunit protein uL6, found in Cytophaga hutchinsonii (strain ATCC 33406 / DSM 1761 / CIP 103989 / NBRC 15051 / NCIMB 9469 / D465).